The sequence spans 241 residues: RecQ-mediated genome instability protein 1 (241 aa).

Belongs to the RMI1 family. Forms a complex with SGS1 and TOP3.

It localises to the cytoplasm. The protein resides in the nucleus. Its function is as follows. Structure-specific DNA-binding protein with a preference for cruciform structures. Also binds single-stranded DNA (ssDNA). Functions together with SGS1 and TOP3 to maintain genome integrity. Essential for proper meiotic cell division. Required for normal S-phase progression and DNA damage response. Required for resistance to the DNA-damaging agent methyl methanesulfonate (MMS). The chain is RecQ-mediated genome instability protein 1 from Saccharomyces cerevisiae (strain ATCC 204508 / S288c) (Baker's yeast).